A 460-amino-acid chain; its full sequence is A-type ATP synthase subunit B (460 aa).

It belongs to the ATPase alpha/beta chains family. In terms of assembly, has multiple subunits with at least A(3), B(3), C, D, E, F, H, I and proteolipid K(x).

Its subcellular location is the cell membrane. Component of the A-type ATP synthase that produces ATP from ADP in the presence of a proton gradient across the membrane. The B chain is a regulatory subunit. This chain is A-type ATP synthase subunit B, found in Thermoplasma acidophilum (strain ATCC 25905 / DSM 1728 / JCM 9062 / NBRC 15155 / AMRC-C165).